Here is a 706-residue protein sequence, read N- to C-terminus: Semenogelin-2 (706 aa).

An N-terminal signal peptide occupies residues 1–23 (MKSIILFVLSLLLILEKQAAVMG). Disordered regions lie at residues 25–62 (KGGS…SKGS), 131–156 (KGGQ…KGIF), and 276–678 (NLNQ…SGAH). Positions 50 to 59 (GQKDKQHTES) are enriched in basic and acidic residues. Residues 137-151 (HGTQNPSQDQGNSPS) show a composition bias toward polar residues. Residues 297–308 (TEERQPNHEENS) are compositionally biased toward basic and acidic residues. The segment covering 329–339 (KSQNQVTIPSQ) has biased composition (polar residues). Positions 340 to 349 (DQEHGHKENK) are enriched in basic and acidic residues. Residues 389–399 (KSQNQVTIPSQ) show a composition bias toward polar residues. A compositionally biased stretch (basic and acidic residues) spans 400–409 (DQEHGHKENK). Positions 449 to 459 (KSQNQVTIPSQ) are enriched in polar residues. Positions 460–469 (DQEHGHKENK) are enriched in basic and acidic residues. Residues 509 to 519 (KSQNQVAIPSQ) are compositionally biased toward polar residues. A compositionally biased stretch (basic and acidic residues) spans 520-529 (DQEHGHKENK). Residues 569-579 (KSQNQVTIPSQ) are compositionally biased toward polar residues. A compositionally biased stretch (basic and acidic residues) spans 580 to 589 (DQEHGHKENK). 2 stretches are compositionally biased toward polar residues: residues 611-622 (KDVSQSSLSFQT) and 630-653 (SQIQ…NSGK). Residues 654-670 (SADREQDLLSHEQEGRY) are compositionally biased toward basic and acidic residues.

This sequence belongs to the semenogelin family. In terms of assembly, interacts with SERPINA5.

It is found in the secreted. Functionally, participates in the formation of a gel matrix (sperm coagulum) entrapping the accessory gland secretions and ejaculated spermatozoa. This is Semenogelin-2 (SEMG2) from Macaca mulatta (Rhesus macaque).